We begin with the raw amino-acid sequence, 343 residues long: Dihydroorotase (343 aa).

2 residues coordinate Zn(2+): H14 and H16. Substrate contacts are provided by residues 16-18 and N42; that span reads HLR. Zn(2+) contacts are provided by K100, H137, and H175. K100 bears the N6-carboxylysine mark. H137 is a binding site for substrate. L220 serves as a coordination point for substrate. D248 lines the Zn(2+) pocket. Residue D248 is part of the active site. H252 and A264 together coordinate substrate.

This sequence belongs to the metallo-dependent hydrolases superfamily. DHOase family. Class II DHOase subfamily. In terms of assembly, homodimer. Zn(2+) serves as cofactor.

It carries out the reaction (S)-dihydroorotate + H2O = N-carbamoyl-L-aspartate + H(+). It participates in pyrimidine metabolism; UMP biosynthesis via de novo pathway; (S)-dihydroorotate from bicarbonate: step 3/3. Catalyzes the reversible cyclization of carbamoyl aspartate to dihydroorotate. This is Dihydroorotase from Parasynechococcus marenigrum (strain WH8102).